Consider the following 575-residue polypeptide: Putative diflavin flavoprotein A 4 (575 aa).

The tract at residues glutamine 41 to histidine 234 is zinc metallo-hydrolase. A Flavodoxin-like domain is found at valine 263–lysine 405. The interval valine 429 to histidine 575 is flavodoxin-reductase-like.

The protein in the N-terminal section; belongs to the zinc metallo-hydrolase group 3 family. This sequence in the C-terminal section; belongs to the flavodoxin reductase family. It depends on Fe cation as a cofactor.

Functionally, mediates electron transfer from NADH to oxygen, reducing it to water. This modular protein has 3 redox cofactors, in other organisms the same activity requires 2 or 3 proteins. The chain is Putative diflavin flavoprotein A 4 (dfa4) from Nostoc sp. (strain PCC 7120 / SAG 25.82 / UTEX 2576).